The sequence spans 672 residues: Poly-beta-1,6-N-acetyl-D-glucosamine N-deacetylase (672 aa).

The N-terminal stretch at 1–20 (MLRNGNKYLLMLVSIIMLTA) is a signal peptide. A lipid anchor (N-palmitoyl cysteine) is attached at Cys21. A lipid anchor (S-diacylglycerol cysteine) is attached at Cys21. Residues 107-349 (KAVVLTFDDG…IQRVKDMQIS (243 aa)) form the NodB homology domain.

This sequence belongs to the polysaccharide deacetylase family.

It localises to the cell outer membrane. In terms of biological role, catalyzes the N-deacetylation of poly-beta-1,6-N-acetyl-D-glucosamine (PGA), a biofilm adhesin polysaccharide. N-deacetylation promotes PGA export through the PgaA porin. This Escherichia coli (strain K12) protein is Poly-beta-1,6-N-acetyl-D-glucosamine N-deacetylase (pgaB).